We begin with the raw amino-acid sequence, 122 residues long: MSITKEQILEAVSEMSVMNVVELISAMEKKFGVSANMSVNTNNNSEKSTIEEKTEFDIFLKSIGPNKVSVIKSVRSATGLGLKEAKDLVESAPTVLKENMSKNDAESLKKTLEDAGAEIEIK.

It belongs to the bacterial ribosomal protein bL12 family. Homodimer. Part of the ribosomal stalk of the 50S ribosomal subunit. Forms a multimeric L10(L12)X complex, where L10 forms an elongated spine to which 2 to 4 L12 dimers bind in a sequential fashion. Binds GTP-bound translation factors.

Forms part of the ribosomal stalk which helps the ribosome interact with GTP-bound translation factors. Is thus essential for accurate translation. The chain is Large ribosomal subunit protein bL12 from Buchnera aphidicola subsp. Schizaphis graminum (strain Sg).